The chain runs to 1364 residues: Condensin complex subunit 1 (1364 aa).

Residues 1-588 form an interaction with XCAP-E and XCAP-C region; sequence MTFHFHIPLA…AQVNPTSEEL (588 aa). The span at 567–577 shows a compositional bias: basic and acidic residues; sequence DLEQPTTKDQD. Disordered stretches follow at residues 567 to 596 and 1273 to 1364; these read DLEQ…VQNS and LENM…SRAK. Polar residues predominate over residues 579–596; that stretch reads AQVNPTSEELPSQEVQNS. Thr-1314 is modified (phosphothreonine; by CDK1). The short motif at 1317–1326 is the Bipartite nuclear localization signal element; that stretch reads PPASRKSRRK. Residues 1333-1345 are compositionally biased toward acidic residues; it reads SDEESDLEAELSE. Residues Thr-1348 and Thr-1353 each carry the phosphothreonine; by CDK1 modification.

This sequence belongs to the CND1 (condensin subunit 1) family. In terms of assembly, component of the condensin complex, which contains the XCAP-E/SMC2 and XCAP-C/SMC4 heterodimer, and three non SMC subunits that probably regulate the complex: XCAP-H/NCAPH, XCAP-D2/NCAPD2 and XCAP-G/NCAPG. Phosphorylated by CDK1. Its phosphorylation, as well as that of XCAP-H and XCAP-G subunits, activates the condensin complex and is required for chromosome condensation.

The protein localises to the nucleus. The protein resides in the cytoplasm. It is found in the chromosome. Functionally, regulatory subunit of the condensin complex, a complex required for conversion of interphase chromatin into mitotic-like condense chromosomes. The condensin complex probably introduces positive supercoils into relaxed DNA in the presence of type I topoisomerases and converts nicked DNA into positive knotted forms in the presence of type II topoisomerases. May target the condensin complex to DNA via its C-terminal domain. This is Condensin complex subunit 1 (ncapd2) from Xenopus laevis (African clawed frog).